A 127-amino-acid polypeptide reads, in one-letter code: Small ribosomal subunit protein uS11 (127 aa).

Belongs to the universal ribosomal protein uS11 family. Part of the 30S ribosomal subunit. Interacts with proteins S7 and S18. Binds to IF-3.

Located on the platform of the 30S subunit, it bridges several disparate RNA helices of the 16S rRNA. Forms part of the Shine-Dalgarno cleft in the 70S ribosome. This chain is Small ribosomal subunit protein uS11, found in Lactococcus lactis subsp. lactis (strain IL1403) (Streptococcus lactis).